Here is a 151-residue protein sequence, read N- to C-terminus: MLP-like protein 168 (151 aa).

The protein belongs to the MLP family.

This chain is MLP-like protein 168 (MLP168), found in Arabidopsis thaliana (Mouse-ear cress).